The following is an 831-amino-acid chain: uncharacterized protein (831 aa).

The active-site Tele-phosphohistidine intermediate is H787.

It belongs to the PEP-utilizing enzyme family.

This is an uncharacterized protein from Bacillus subtilis (strain 168).